We begin with the raw amino-acid sequence, 429 residues long: Glutamate--tRNA ligase 1 (429 aa).

Positions 6-16 (PSPTGDMHIGN) match the 'HIGH' region motif. The 'KMSKS' region motif lies at 235-239 (KMSKR). Lysine 238 contacts ATP.

Belongs to the class-I aminoacyl-tRNA synthetase family. Glutamate--tRNA ligase type 1 subfamily. In terms of assembly, monomer.

The protein resides in the cytoplasm. It catalyses the reaction tRNA(Glu) + L-glutamate + ATP = L-glutamyl-tRNA(Glu) + AMP + diphosphate. In terms of biological role, catalyzes the attachment of glutamate to tRNA(Glu) in a two-step reaction: glutamate is first activated by ATP to form Glu-AMP and then transferred to the acceptor end of tRNA(Glu). The polypeptide is Glutamate--tRNA ligase 1 (Campylobacter fetus subsp. fetus (strain 82-40)).